Reading from the N-terminus, the 1713-residue chain is Cell wall protein AWA1 (1713 aa).

The signal sequence occupies residues Met-1–Gly-23. Asn-34 carries an N-linked (GlcNAc...) asparagine glycan. 3 disordered regions span residues Ile-80–Ser-117, Thr-256–Ile-327, and Ser-359–Ser-939. Over residues Thr-256–Ser-275 the composition is skewed to low complexity. 2 stretches are compositionally biased toward polar residues: residues Ala-276–Ile-327 and Ser-359–Pro-368. The span at Pro-374 to Ser-939 shows a compositional bias: low complexity. N-linked (GlcNAc...) asparagine glycosylation is found at Asn-1133, Asn-1241, and Asn-1278. The interval Lys-1582 to Lys-1603 is disordered. Ala-1692 carries the GPI-anchor amidated alanine lipid modification. Residues Ala-1693–Asn-1713 constitute a propeptide, removed in mature form.

The protein belongs to the SRP1/TIP1 family. In terms of processing, the GPI-anchor is attached to the protein in the endoplasmic reticulum and serves to target the protein to the cell surface. There, the glucosamine-inositol phospholipid moiety is cleaved off and the GPI-modified mannoprotein is covalently attached via its lipidless GPI glycan remnant to the 1,6-beta-glucan of the outer cell wall layer.

The protein resides in the secreted. The protein localises to the cell wall. It is found in the membrane. Involved in cell wall organization and biosynthesis. Confers cell surface hydrophobicity (CSH). This Saccharomyces cerevisiae (strain Kyokai no. 7 / NBRC 101557) (Baker's yeast) protein is Cell wall protein AWA1 (AWA1).